A 142-amino-acid polypeptide reads, in one-letter code: Ribosome maturation factor RimP (142 aa).

The protein belongs to the RimP family.

The protein localises to the cytoplasm. Its function is as follows. Required for maturation of 30S ribosomal subunits. The polypeptide is Ribosome maturation factor RimP (Aromatoleum aromaticum (strain DSM 19018 / LMG 30748 / EbN1) (Azoarcus sp. (strain EbN1))).